The following is a 114-amino-acid chain: Evasin P1096 (114 aa).

An N-terminal signal peptide occupies residues 1–23 (MELNAFTILHIAVFIAVGYYANT). 3 cysteine pairs are disulfide-bonded: cysteine 47–cysteine 65, cysteine 51–cysteine 67, and cysteine 61–cysteine 78. Asparagine 50 carries an N-linked (GlcNAc...) asparagine glycan. Positions 89–114 (DPSQDPSIDEAAPRESVSKRRSNGES) are disordered. Residues 99–114 (AAPRESVSKRRSNGES) are compositionally biased toward basic and acidic residues.

It localises to the secreted. Functionally, salivary chemokine-binding protein which binds to host chemokine CXCL8. This Ixodes ricinus (Common tick) protein is Evasin P1096.